The primary structure comprises 655 residues: A-type voltage-gated potassium channel KCND3 (655 aa).

The Cytoplasmic segment spans residues 1-182 (MAAGVAAWLP…FENPHTSTLA (182 aa)). Residues 6 to 21 (AAWLPFARAAAIGWMP) form an interaction with KCNIP1 and KCNIP2 region. The interaction with KCNIP1 stretch occupies residues 70-78 (EKEFFFNED). Zn(2+) contacts are provided by histidine 104, cysteine 110, cysteine 131, and cysteine 132. Position 153 is a phosphoserine (serine 153). The chain crosses the membrane as a helical span at residues 183 to 204 (LVFYYVTGFFIAVSVITNVVET). Residues 205–223 (VPCGTVPGSKELPCGERYS) lie on the Extracellular side of the membrane. Residues 224 to 246 (VAFFCLDTACVMIFTVEYLLRLF) traverse the membrane as a helical segment. Topologically, residues 247 to 253 (AAPSRYR) are cytoplasmic. Residues 254 to 277 (FIRSVMSIIDVVAIMPYYIGLVMT) form a helical membrane-spanning segment. The Extracellular portion of the chain corresponds to 278-283 (NNEDVS). The helical; Voltage-sensor transmembrane segment at 284 to 306 (GAFVTLRVFRVFRIFKFSRHSQG) threads the bilayer. Residues 307-318 (LRILGYTLKSCA) are Cytoplasmic-facing. A helical membrane pass occupies residues 319 to 343 (SELGFLLFSLTMAIIIFATVMFYAE). The Extracellular segment spans residues 344 to 352 (KGSSASKFT). An intramembrane region (helical) is located at residues 353–366 (SIPASFWYTIVTMT). Residues threonine 367, leucine 368, glycine 369, and tyrosine 370 each contribute to the K(+) site. Positions 367–372 (TLGYGD) match the Selectivity filter motif. Residues 367-374 (TLGYGDMV) lie within the membrane without spanning it. The chain crosses the membrane as a helical span at residues 378-400 (IAGKIFGSICSLSGVLVIALPVP). Residues 401-655 (VIVSNFSRIY…ASNVVKVSVL (255 aa)) are Cytoplasmic-facing. The residue at position 459 (threonine 459) is a Phosphothreonine. The interval 470-487 (SLIESQHHHLLHCLEKTT) is interaction with KCNIP1 and KCNIP2. Residues 472-487 (IESQHHHLLHCLEKTT) are mediates dendritic targeting. The residue at position 569 (serine 569) is a Phosphoserine; by CaMK2D. At serine 585 the chain carries Phosphoserine. The disordered stretch occupies residues 618–644 (PAPPALTPEGETRPPPASPGPNTNIPS).

This sequence belongs to the potassium channel family. D (Shal) (TC 1.A.1.2) subfamily. Kv4.3/KCND3 sub-subfamily. Homotetramer. Heterotetramer with KCND2. Associates with the regulatory subunits KCNIP3 and KCNIP4. Interacts with KCNE1, KCNE2, SCN1B and KCNAB1 and DLG1. Component of heteromultimeric potassium channels. Identified in potassium channel complexes containing KCND1, KCND2, KCND3, KCNIP1, KCNIP2, KCNIP3, KCNIP4, DPP6 and DPP10. Interacts with KCNIP1; each KCNIP1 monomer interacts with two adjacent KCND3 subunits, through both the N-terminal inactivation ball of a KCND3 subunit and a C-terminal helix from the adjacent KCND3 subunit, clamping them together; this interaction stabilizes the tetrameric form and modulates the channel gating kinetics namely channel activation and inactivation kinetics and rate of recovery from inactivation. Interacts with DPP6; this interaction modulates the channel gating kinetics namely channel activation and inactivation kinetics and rate of recovery from inactivation. Interacts with KCNIP2; each KCNIP2 monomer interacts with two adjacent KCND3 subunits, through both the N-terminal inactivation ball of a KCND3 subunit and a C-terminal helix from the adjacent KCND3 subunit, clamping them together; this interaction modulates the channel gating kinetics. In terms of processing, regulated through phosphorylation at Ser-569 by CaMK2D. As to expression, detected in carotid body chemoreceptor cells and in frontal cortex.

The protein resides in the cell membrane. Its subcellular location is the sarcolemma. It is found in the cell projection. It localises to the dendrite. The catalysed reaction is K(+)(in) = K(+)(out). Functionally, pore-forming (alpha) subunit of voltage-gated A-type potassium channels that mediates transmembrane potassium transport in excitable membranes, in brain and heart. In cardiomyocytes, may generate the transient outward potassium current I(To). In neurons, may conduct the transient subthreshold somatodendritic A-type potassium current (ISA). Kinetics properties are characterized by fast activation at subthreshold membrane potentials, rapid inactivation, and quick recovery from inactivation. Channel properties are modulated by interactions with regulatory subunits. Interaction with the regulatory subunits KCNIP1 or KCNIP2 modulates the channel gating kinetics namely channel activation and inactivation kinetics and rate of recovery from inactivation. Likewise, interaction with DPP6 modulates the channel gating kinetics namely channel activation and inactivation kinetics. This is A-type voltage-gated potassium channel KCND3 from Oryctolagus cuniculus (Rabbit).